The chain runs to 285 residues: Protein FD (285 aa).

A compositionally biased stretch (basic residues) spans 1–12; the sequence is MLSSAKHQRNHR. Disordered stretches follow at residues 1–59, 79–107, 115–134, 198–236, and 257–285; these read MLSS…QKRS, NRHSPHPQHNHEPRFRGQNHHNQNPNSIF, LNQEPAPTSQTTGSAPNGDS, SSSFGKKRGQDSNEGSGNRRHKRMIKNRESAARSRARKQ, and KRQQDQLKMAAAIQQPKKNTLQRSSTAPF. The segment covering 13–25 has biased composition (polar residues); that stretch reads LSATNKNQTLTKV. The segment covering 26-50 has biased composition (low complexity); the sequence is SSISSSSPSSSSSSSSTSSSSPLPS. The segment covering 98-107 has biased composition (polar residues); the sequence is HHNQNPNSIF. Residues 214-277 form the bZIP domain; the sequence is GNRRHKRMIK…AIQQPKKNTL (64 aa). The segment at 216-235 is basic motif; sequence RRHKRMIKNRESAARSRARK. The tract at residues 242-263 is leucine-zipper; the sequence is LELEVAHLQAENARLKRQQDQL. Residues 272–285 are compositionally biased toward polar residues; sequence PKKNTLQRSSTAPF. Thr282 is subject to Phosphothreonine.

This sequence belongs to the bZIP family. In terms of assembly, self-interacts. Interacts with FT and FDP/BZIP27. Interacts with GRF3 and GRF4, and in a calcium-independent manner, with CPK6 and CPK33. Phosphorylated at Thr-282 in a calcium-dependent manner by CPK6 and CPK33. In terms of tissue distribution, highly expressed in shoot apex.

It localises to the nucleus. In terms of biological role, transcription factor required for the transition to flowering promoted by FT. The chain is Protein FD from Arabidopsis thaliana (Mouse-ear cress).